The primary structure comprises 457 residues: Adenylosuccinate synthetase (457 aa).

GTP is bound by residues 45 to 51 (GDEGKGK) and 73 to 75 (GHT). Catalysis depends on Asp46, which acts as the Proton acceptor. Asp46 and Gly73 together coordinate Mg(2+). IMP is bound by residues 46-49 (DEGK), 71-74 (NAGH), Thr163, Arg177, Asn255, Thr270, and Arg334. His74 (proton donor) is an active-site residue. A substrate-binding site is contributed by 330–336 (VTTKRVR). Residues Arg336, 362-364 (KLD), and 444-446 (GVG) each bind GTP.

It belongs to the adenylosuccinate synthetase family. As to quaternary structure, homodimer. Requires Mg(2+) as cofactor.

The protein resides in the cytoplasm. The catalysed reaction is IMP + L-aspartate + GTP = N(6)-(1,2-dicarboxyethyl)-AMP + GDP + phosphate + 2 H(+). It participates in purine metabolism; AMP biosynthesis via de novo pathway; AMP from IMP: step 1/2. Plays an important role in the de novo pathway and in the salvage pathway of purine nucleotide biosynthesis. Catalyzes the first committed step in the biosynthesis of AMP from IMP. This chain is Adenylosuccinate synthetase, found in Aedes aegypti (Yellowfever mosquito).